Here is a 215-residue protein sequence, read N- to C-terminus: Pyrrolidone-carboxylate peptidase (215 aa).

Catalysis depends on residues Glu-78, Cys-141, and His-165.

The protein belongs to the peptidase C15 family. As to quaternary structure, homotetramer.

The protein resides in the cytoplasm. The catalysed reaction is Release of an N-terminal pyroglutamyl group from a polypeptide, the second amino acid generally not being Pro.. In terms of biological role, removes 5-oxoproline from various penultimate amino acid residues except L-proline. In Lactobacillus johnsonii (strain CNCM I-12250 / La1 / NCC 533), this protein is Pyrrolidone-carboxylate peptidase.